We begin with the raw amino-acid sequence, 285 residues long: RNA 5'-monophosphate methyltransferase (285 aa).

The tract at residues 1 to 28 (MAATQELSKGGVEEAVEEDDPAALKPGA) is disordered. S-adenosyl-L-methionine is bound by residues Arg46, Asn77, Asp111, 136–137 (DI), and Met165. The 223-residue stretch at 53 to 275 (ELLRQLFPPE…KHTEETQAIP (223 aa)) folds into the Bin3-type SAM domain.

The protein belongs to the methyltransferase superfamily. As to quaternary structure, interacts with DICER1; the interaction may be mediated by RNA.

The protein localises to the cytoplasm. The enzyme catalyses a 5'-end 5'-phospho-ribonucleoside-RNA + S-adenosyl-L-methionine = a 5'-end (5'-methylphospho)-ribonucleoside-RNA + S-adenosyl-L-homocysteine. It carries out the reaction a 5'-end 5'-phospho-ribonucleoside-RNA + 2 S-adenosyl-L-methionine = a 5'-end (5'-bismethylphospho)-ribonucleoside-RNA + 2 S-adenosyl-L-homocysteine. Its function is as follows. O-methyltransferase that specifically monomethylates 5'-monophosphate of cytoplasmic histidyl tRNA (tRNA(His)), acting as a capping enzyme by protecting tRNA(His) from cleavage by DICER1. Also able, with less efficiently, to methylate the 5' monophosphate of a subset of pre-miRNAs, acting as a negative regulator of miRNA processing. The 5' monophosphate of pre-miRNAs is recognized by DICER1 and is required for pre-miRNAs processing: methylation at this position reduces the processing of pre-miRNAs by DICER1. Was also reported to mediate dimethylation of pre-miR-145; however dimethylation cannot be reproduced by another group which observes a monomethylation of pre-miR-145. The protein is RNA 5'-monophosphate methyltransferase of Rattus norvegicus (Rat).